A 221-amino-acid polypeptide reads, in one-letter code: Flagellar L-ring protein 1 (221 aa).

A signal peptide spans 1–16 (MKRFLILTPMVLALCG). Cysteine 17 is lipidated: N-palmitoyl cysteine. A lipid anchor (S-diacylglycerol cysteine) is attached at cysteine 17.

The protein belongs to the FlgH family. The basal body constitutes a major portion of the flagellar organelle and consists of four rings (L,P,S, and M) mounted on a central rod.

It localises to the cell outer membrane. It is found in the bacterial flagellum basal body. Functionally, assembles around the rod to form the L-ring and probably protects the motor/basal body from shearing forces during rotation. The sequence is that of Flagellar L-ring protein 1 from Yersinia pestis.